We begin with the raw amino-acid sequence, 351 residues long: Photosystem II D2 protein (351 aa).

Residues 39–59 traverse the membrane as a helical segment; sequence CAFLALGGWLTGTTFVTSWYT. Position 116 (H116) interacts with chlorophyll a. The helical transmembrane segment at 123–139 threads the bilayer; the sequence is GFMLRQFEIARLVGIRP. Pheophytin a is bound by residues Q128 and N141. The chain crosses the membrane as a helical span at residues 151–164; that stretch reads VFVSVFLMYPLGQS. H196 contributes to the chlorophyll a binding site. Residues 206-226 form a helical membrane-spanning segment; that stretch reads GALLCAIHGATVENTLFEDGE. A plastoquinone is bound by residues H213 and F260. H213 provides a ligand contact to Fe cation. A Fe cation-binding site is contributed by H267. A helical transmembrane segment spans residues 277–293; the sequence is GLWMSAVGIVGLALNLR.

The protein belongs to the reaction center PufL/M/PsbA/D family. PSII is composed of 1 copy each of membrane proteins PsbA, PsbB, PsbC, PsbD, PsbE, PsbF, PsbH, PsbI, PsbJ, PsbK, PsbL, PsbM, PsbT, PsbX, PsbY, PsbZ, Psb30/Ycf12, peripheral proteins PsbO, CyanoQ (PsbQ), PsbU, PsbV and a large number of cofactors. It forms dimeric complexes. The D1/D2 heterodimer binds P680, chlorophylls that are the primary electron donor of PSII, and subsequent electron acceptors. It shares a non-heme iron and each subunit binds pheophytin, quinone, additional chlorophylls, carotenoids and lipids. There is also a Cl(-1) ion associated with D1 and D2, which is required for oxygen evolution. The PSII complex binds additional chlorophylls, carotenoids and specific lipids. is required as a cofactor.

The protein resides in the cellular thylakoid membrane. It catalyses the reaction 2 a plastoquinone + 4 hnu + 2 H2O = 2 a plastoquinol + O2. Its function is as follows. Photosystem II (PSII) is a light-driven water:plastoquinone oxidoreductase that uses light energy to abstract electrons from H(2)O, generating O(2) and a proton gradient subsequently used for ATP formation. It consists of a core antenna complex that captures photons, and an electron transfer chain that converts photonic excitation into a charge separation. The D1/D2 (PsbA/PsbD) reaction center heterodimer binds P680, the primary electron donor of PSII as well as several subsequent electron acceptors. D2 is needed for assembly of a stable PSII complex. The chain is Photosystem II D2 protein from Nostoc sp. (strain PCC 7120 / SAG 25.82 / UTEX 2576).